The following is a 171-amino-acid chain: Disulfide bond formation protein B (171 aa).

Residues 1–13 (MSALTRFAQSRLA) are Cytoplasmic-facing. The helical transmembrane segment at 14 to 30 (WTLLLLTAVGLEACALF) threads the bilayer. Residues 31 to 48 (FQHVMKLDPCVMCIYQRL) lie on the Periplasmic side of the membrane. Cys40 and Cys43 are joined by a disulfide. A helical transmembrane segment spans residues 49–64 (AVLGVLTAGLIGVVGH). At 65–71 (QFRLLRF) the chain is on the cytoplasmic side. Residues 72–89 (LGVLLWGVSAAWGLKLAL) form a helical membrane-spanning segment. The Periplasmic portion of the chain corresponds to 90 to 144 (ELVEMQTNPSPFSTCSFLPEFPEWMPLHEWFPSVFLPTGMCTDIPWEMFGITMSQ). A disulfide bond links Cys104 and Cys130. A helical transmembrane segment spans residues 145 to 163 (WMVVAFSTYLIALVVFIVP). Over 164 to 171 (ALMPTKKA) the chain is Cytoplasmic.

Belongs to the DsbB family.

It localises to the cell inner membrane. Required for disulfide bond formation in some periplasmic proteins. Acts by oxidizing the DsbA protein. The chain is Disulfide bond formation protein B from Shewanella loihica (strain ATCC BAA-1088 / PV-4).